Consider the following 694-residue polypeptide: U-box domain-containing protein 1 (694 aa).

The U-box domain maps to Asn-292–Lys-366. ARM repeat units follow at residues Ser-392–Lys-432, Met-435–Ile-474, Asp-476–Met-516, Asp-519–Val-558, Asn-560–Gly-599, Ser-601–Lys-641, and Leu-646–Arg-685.

Interacts with LYK3. Binds to NORK/DMI2. Post-translationally, phosphorylated by LYK3 in vitro. Phosphorylated by NORK/DMI2. As to expression, present ubiquitously at very low levels during nonsymbiotic growth. Accumulates in roots and nodules during symbiotic growth with rhizobia and mycorrhiza.

It localises to the cell membrane. It catalyses the reaction S-ubiquitinyl-[E2 ubiquitin-conjugating enzyme]-L-cysteine + [acceptor protein]-L-lysine = [E2 ubiquitin-conjugating enzyme]-L-cysteine + N(6)-ubiquitinyl-[acceptor protein]-L-lysine.. The protein operates within protein modification; protein ubiquitination. Its function is as follows. Exhibits U-box-dependent E3 ubiquitin ligase activity in vitro. Negatively modulates successive stages of infection and development of rhizobial (e.g. Sinorhizobium meliloti) and arbuscular mycorrhizal fungi (AM, e.g. Rhizophagus irregularis) symbioses, in an ubiquitin ligase activity-dependent manner. Negative regulator of the LYK3 signaling pathway leading to nitrogen-fixing symbiosis (e.g. infection and nodulation) by rhizobia. May be involved in the discrimination of rhizobium strains producing variant Nod factors. The chain is U-box domain-containing protein 1 from Medicago truncatula (Barrel medic).